The chain runs to 468 residues: Glutamate--tRNA ligase (468 aa).

The 'HIGH' region motif lies at 12–22 (PSPTGFIHLGN). The 'KMSKS' region signature appears at 244–248 (KMSKR). Position 247 (Lys-247) interacts with ATP.

The protein belongs to the class-I aminoacyl-tRNA synthetase family. Glutamate--tRNA ligase type 1 subfamily. In terms of assembly, monomer.

The protein localises to the cytoplasm. The enzyme catalyses tRNA(Glu) + L-glutamate + ATP = L-glutamyl-tRNA(Glu) + AMP + diphosphate. Functionally, catalyzes the attachment of glutamate to tRNA(Glu) in a two-step reaction: glutamate is first activated by ATP to form Glu-AMP and then transferred to the acceptor end of tRNA(Glu). The protein is Glutamate--tRNA ligase of Polynucleobacter asymbioticus (strain DSM 18221 / CIP 109841 / QLW-P1DMWA-1) (Polynucleobacter necessarius subsp. asymbioticus).